The sequence spans 116 residues: MSFCSFFGGEVFQNHFEPGVYVCAKCSYELFSSHSKYAHSSPWPAFTETIHPDSVTKCPEKNRPEALKVSCGKCGNGLGHEFLNDGPKRGQSRFUIFSSSLKFVPKGKEAAASQGH.

Positions 1–106 constitute a MsrB domain; the sequence is MSFCSFFGGE…FSSSLKFVPK (106 aa). 4 residues coordinate Zn(2+): Cys23, Cys26, Cys71, and Cys74. Sec95 serves as the catalytic Nucleophile. Position 95 (Sec95) is a non-standard amino acid, selenocysteine.

Belongs to the MsrB Met sulfoxide reductase family. The cofactor is Zn(2+). Post-translationally, truncated MSRB1/SEPX1 proteins produced by failed UGA/Sec decoding are ubiquitinated by the CRL2(FEM1C) E3 ubiquitin-protein ligase complex.

It localises to the cytoplasm. Its subcellular location is the nucleus. The protein resides in the cytoskeleton. It catalyses the reaction L-methionyl-[protein] + [thioredoxin]-disulfide + H2O = L-methionyl-(R)-S-oxide-[protein] + [thioredoxin]-dithiol. It carries out the reaction [thioredoxin]-disulfide + L-methionine + H2O = L-methionine (R)-S-oxide + [thioredoxin]-dithiol. Methionine-sulfoxide reductase that specifically reduces methionine (R)-sulfoxide back to methionine. While in many cases, methionine oxidation is the result of random oxidation following oxidative stress, methionine oxidation is also a post-translational modification that takes place on specific residue. Acts as a regulator of actin assembly by reducing methionine (R)-sulfoxide mediated by MICALs (MICAL1, MICAL2 or MICAL3) on actin, thereby promoting filament repolymerization. Plays a role in innate immunity by reducing oxidized actin, leading to actin repolymerization in macrophages. The polypeptide is Methionine-R-sulfoxide reductase B1 (Msrb1) (Mus musculus (Mouse)).